Consider the following 446-residue polypeptide: Chromogranin-A (446 aa).

The N-terminal stretch at 1–16 is a signal peptide; sequence SAAALALLLCAGQVIA. Cys33 and Cys54 are oxidised to a cystine. Positions 85-426 are disordered; it reads AKERSHQQKK…RPEDQELESL (342 aa). A Phosphoserine modification is found at Ser97. Residues 105–138 are compositionally biased toward basic and acidic residues; it reads VLEKQNDQAELKEGTEEASSKEAAEKRGDSKEVE. The span at 160 to 171 shows a compositional bias: acidic residues; the sequence is EAEDQTPGEEEA. Ser209 carries the post-translational modification Phosphoserine. Residues 226-243 are compositionally biased toward basic and acidic residues; it reads AGEKAVPEEEGPRSEAFD. Ser286 is subject to Phosphoserine. Residue Gly304 is modified to Glycine amide. Ser319 carries the post-translational modification Phosphoserine. Residues 319 to 346 show a composition bias toward basic and acidic residues; it reads SEEWENAKRWSKMDRLAKELTAEKRLQG. The segment covering 347–357 has biased composition (acidic residues); sequence EEEEEEEEEDP. Position 360 is a phosphoserine (Ser360). A Methionine sulfoxide modification is found at Met361. 4 positions are modified to phosphoserine: Ser387, Ser391, Ser413, and Ser427. Residues 403–420 show a composition bias toward basic and acidic residues; the sequence is YLEEKKEEEGSANRRPED. Residue Ser413 is glycosylated (O-linked (Xyl...) (chondroitin sulfate) serine).

This sequence belongs to the chromogranin/secretogranin protein family. As to quaternary structure, self-interacts; self-assembly is promoted in vitro by chondroitin sulfate attachment which occurs at mildly acidic pH conditions. Interacts with SCG3. Interacts with ITPR1 in the secretory granules. O-glycosylated; contains chondroitin sulfate (CS). CS attachment is pH-dependent, being observed at mildly acidic conditions of pH 5 but not at neutral pH, and promotes self-assembly in vitro. Post-translationally, parathyroid CHGA is sulfated on tyrosine residues, whereas adrenal CHGA seems to be mainly sulfated on oligosaccharide residues.

The protein resides in the secreted. Its subcellular location is the cytoplasmic vesicle. It is found in the secretory vesicle. It localises to the neuronal dense core vesicle. Functionally, strongly inhibits glucose induced insulin release from the pancreas. In terms of biological role, inhibits low calcium-stimulated parathyroid cell secretion. Its function is as follows. Inhibits catecholamine release from chromaffin cells and noradrenergic neurons by acting as a non-competitive nicotinic cholinergic antagonist. Can induce mast cell migration, degranulation and production of cytokines and chemokines. Regulates granule biogenesis in endocrine cells by up-regulating the transcription of protease nexin 1 (SERPINE2) via a cAMP-PKA-SP1 pathway. This leads to inhibition of granule protein degradation in the Golgi complex which in turn promotes granule formation. The protein is Chromogranin-A (CHGA) of Sus scrofa (Pig).